The chain runs to 1621 residues: MGEFKSQLRTLLKKNLLLKGKSKCAICCEILFPIIVILVIFAILVLVMAFKANYDPYNASNFVNRFENTVLLYGNADGALNVEQLGVMNILKNEVATAKNLNSTQIDQLFIEINDQTAMEAFFQNKSDFVFSAVWFNNSALSSGTNPFQYNIRVDSDDVMDTEELIKEDDTSDSEVYVKKRFVATQVAMDQAIFSYFGLNKTLNVKGQRYPDPWTELWQKWIQGRDGIFKDAGSVFITAALMIFGFRLITDLVIEKETKIRESMKMMGLNDLAYFISWMITSLVTALPVNLIISIILKGSSVIHHTNWGVVIFTLILYLLTLLLLAFILSMFFDKSKFCGLLSFVIIIAINIGGIFVAKYDFAPGAKLFLCLISPIAIACSIFAMSARDLEEINTYNWDMMVTENQVIGMLVLDIFFYIFLVWYLDNVVTTEFGTKQKWYFLFTKKYWFPKKCNENGDEQDIESTYQNEDVEMTPVGVGQKVTISIRNLRKEYNTGDGLRVAVNDLYLDMYENQIHALLGPNGSGKSTTIGMMTGLTPPTNGNAFVHGYGILNQMSSVRKHLGVCPQTDIIWQQLTVLDHLKIYASLKGVSPSEIQREAEKMAVEVDLGEKIHSQAGSLSGGQKRKLCLGIAFIGRSDVIFLDEVSSGMDPLSRRVVWDFLLKYKKGRTIILTTHYLEEADYLGDRIAIISHGKLRCDGSSLYLKNKFGCGYLLTCSKILSSMNNFNAQQVTEFIHNYIPEATILSNAGTELSYRLPTASLPHFAQFFREFDDRLQSFGLLTYGISVTTLEEVFLSLGREAALEKGGFNIDQNENQDLEQLRKSIAISSTGVKAGQQFKGLLIKRIKTSIKDAKSFFLTLVIPLVFIIGSIIMYKAMDKPQIFYNNATVPLTMNLGIYSGLENNFVPMQSSNELNWENSLNSSPYFNKFRFIPQTENFEDYLIEGKTNGSFAYKSSAGAINFTLPIDVSSTTIDYTAFYNKDYIHSLPVHINLVNDAVLRKHNNIGIQVTNMPFKHVLSNFDLASEGMNISSIVYFIIIMMAGYALMAGSFAGNVAQERTNRVKRLLYISGCKKYVYWLSNLVWDYFFSFILILLTTCILAGIRENYKSQFGLMFLCLILFCVSVVPLSYLLSYRFASFGKATGAITAIHFAIGIIFVIISLNLRIQVLIDQDVDFQKAADAVDIVFCILSPLFAYSRILFLVSEFPGSVRVGTLKVDNYWSMDYGGSPMIILAAHCIVWVSWIMILDYTPELIGKIRNPKNIEAPPPPDDEDSDVTAERTRLLSVGPNDEPLQFRNLHKLFPAVGKAAPKAAVYNSTLSIPKGQTFGLLGLNGAGKTTTIAMLCGDIVPSSGEVTINGHDLITDRGQALRSNGLCPQFDALITLLSAREQLTLYCAIKGVPEDKVKEVVEAFIKMMDLGAIANSNTGGYSGGNKRKTSLSIAMLGNPSIVSLDEPSTGCDAVVRKYIWNVVSELAKDKVIILTSHSMAEVEALCYRMTIMRDGKMKCLGSIQHIKSKFGAGYTFDVKFKKEYLDSGIQTVLKAIPNSIVLDEHDVMASFEIPNPPDNPVKISTLFESLSHLTILDDYNVSQTSLESVFLKLTGASYEDRLNLNNQKHTSD.

A run of 7 helical transmembrane segments spans residues 30 to 50 (ILFP…VMAF), 234 to 254 (SVFI…DLVI), 276 to 296 (ISWM…ISII), 309 to 329 (GVVI…AFIL), 338 to 358 (FCGL…IFVA), 365 to 385 (GAKL…IFAM), and 405 to 425 (NQVI…VWYL). The ABC transporter 1 domain maps to 484–717 (ISIRNLRKEY…FGCGYLLTCS (234 aa)). 520–527 (GPNGSGKS) provides a ligand contact to ATP. Transmembrane regions (helical) follow at residues 856-876 (FFLT…MYKA), 1033-1053 (IVYF…SFAG), 1083-1103 (VWDY…LAGI), 1111-1131 (FGLM…LSYL), 1142-1162 (ATGA…IISL), 1183-1203 (VDIV…LFLV), and 1227-1247 (GSPM…IMIL). An ABC transporter 2 domain is found at 1293–1528 (LQFRNLHKLF…FGAGYTFDVK (236 aa)). An ATP-binding site is contributed by 1331–1338 (GLNGAGKT).

The protein belongs to the ABC transporter superfamily. ABCA family.

It is found in the membrane. The protein is ABC transporter A family member 2 (abcA2) of Dictyostelium discoideum (Social amoeba).